The sequence spans 100 residues: Small ribosomal subunit protein uS14 (100 aa).

Belongs to the universal ribosomal protein uS14 family. In terms of assembly, part of the 30S ribosomal subunit. Contacts proteins S3 and S10.

Binds 16S rRNA, required for the assembly of 30S particles and may also be responsible for determining the conformation of the 16S rRNA at the A site. In Gloeothece citriformis (strain PCC 7424) (Cyanothece sp. (strain PCC 7424)), this protein is Small ribosomal subunit protein uS14.